The primary structure comprises 97 residues: Large ribosomal subunit protein bL27 (97 aa).

Residues 1 to 9 (MFTFDLQLF) constitute a propeptide that is removed on maturation.

The protein belongs to the bacterial ribosomal protein bL27 family. In terms of processing, the N-terminus is cleaved by ribosomal processing cysteine protease Prp.

The sequence is that of Large ribosomal subunit protein bL27 from Syntrophomonas wolfei subsp. wolfei (strain DSM 2245B / Goettingen).